Here is a 334-residue protein sequence, read N- to C-terminus: Tryptophan--tRNA ligase (334 aa).

ATP-binding positions include 11–13 and 19–20; these read QPS and GN. A 'HIGH' region motif is present at residues 12–20; the sequence is PSGELTIGN. Asp135 lines the L-tryptophan pocket. Residues 147 to 149, Val186, and 195 to 199 contribute to the ATP site; these read GED and KMSKS. Residues 195 to 199 carry the 'KMSKS' region motif; sequence KMSKS.

The protein belongs to the class-I aminoacyl-tRNA synthetase family. Homodimer.

The protein resides in the cytoplasm. It catalyses the reaction tRNA(Trp) + L-tryptophan + ATP = L-tryptophyl-tRNA(Trp) + AMP + diphosphate + H(+). Catalyzes the attachment of tryptophan to tRNA(Trp). The sequence is that of Tryptophan--tRNA ligase from Klebsiella aerogenes (Enterobacter aerogenes).